The sequence spans 61 residues: Small ribosomal subunit protein uS14B (61 aa).

4 residues coordinate Zn(2+): C24, C27, C40, and C43.

It belongs to the universal ribosomal protein uS14 family. Zinc-binding uS14 subfamily. In terms of assembly, part of the 30S ribosomal subunit. Contacts proteins S3 and S10. Zn(2+) is required as a cofactor.

Its function is as follows. Binds 16S rRNA, required for the assembly of 30S particles and may also be responsible for determining the conformation of the 16S rRNA at the A site. The polypeptide is Small ribosomal subunit protein uS14B (Lacticaseibacillus paracasei (strain ATCC 334 / BCRC 17002 / CCUG 31169 / CIP 107868 / KCTC 3260 / NRRL B-441) (Lactobacillus paracasei)).